Consider the following 439-residue polypeptide: MGRMCIAMAPRTLLLLIGCQLVFGFNEPINIVSHLNDDWFLFGDSRSDCTYVENNGHPKLDWLDLDPKLCNSGKIAAKSGNSLFRSFHFTDFYNYTGEGDQIIFYEGVSFSPSHGFKCLVEGDNNKWMGNKARFYALLYKKMAQYRSLSFVTVPYAYGGNAKPTSICKDKTLTLNNPTFISKESNYVDYYYVSEANFTLQGCDEFIVPLCVFNGHSRGSSSDPANKYYTDSQSYYNIDTGVLYGFNSTLDVGNTAQNPGLDLTCMYLVLTPGNYKAVSLEYLLTIPSKAICLRKPKRFMPVQVVDSRWNSTRQSDNMTAVACQLPYCFFRNTSADYSGDTHDVHHGDFYFRQLLSGLLYNVSCIAQQGAFLYNNVSSIWPVYGYGHCPTAANIGYMAPVCLYDPLPVILLGVLLGIAVLIIVFLILYFMADSSVRLHEA.

Residues 1–22 (MGRMCIAMAPRTLLLLIGCQLV) form the signal peptide. The segment at 12–132 (TLLLLIGCQL…DNNKWMGNKA (121 aa)) is esterase domain 1. Residues 23–407 (FGFNEPINIV…PVCLYDPLPV (385 aa)) are Virion surface-facing. S45 serves as the catalytic Nucleophile. A disulfide bond links C49 and C70. N94 carries N-linked (GlcNAc...) asparagine; by host glycosylation. A disulfide bond links C118 and C167. The segment at 133–281 (RFYALLYKKM…GNYKAVSLEY (149 aa)) is receptor binding. Residues N196, N246, N309, and N316 are each glycosylated (N-linked (GlcNAc...) asparagine; by host). Intrachain disulfides connect C202–C291 and C210–C264. Positions 282–395 (LLTIPSKAIC…HCPTAANIGY (114 aa)) are esterase domain 2. Cysteines 322 and 327 form a disulfide. An N-linked (GlcNAc...) asparagine; by host glycan is attached at N331. Residues D342 and H345 each act as charge relay system in the active site. N360 and N374 each carry an N-linked (GlcNAc...) asparagine; by host glycan. Residues C363 and C387 are joined by a disulfide bond. A helical transmembrane segment spans residues 408-428 (ILLGVLLGIAVLIIVFLILYF). Over 429-439 (MADSSVRLHEA) the chain is Intravirion.

This sequence belongs to the influenza type C/coronaviruses hemagglutinin-esterase family. Homodimer; disulfide-linked. Forms a complex with the M protein in the pre-Golgi. Associates then with S-M complex to form a ternary complex S-M-HE. Post-translationally, N-glycosylated in the host RER.

It is found in the virion membrane. It localises to the host cell membrane. It carries out the reaction N-acetyl-9-O-acetylneuraminate + H2O = N-acetylneuraminate + acetate + H(+). The catalysed reaction is N-acetyl-4-O-acetylneuraminate + H2O = N-acetylneuraminate + acetate + H(+). Functionally, structural protein that makes short spikes at the surface of the virus. Contains receptor binding and receptor-destroying activities. Mediates de-O-acetylation of N-acetyl-4-O-acetylneuraminic acid, which is probably the receptor determinant recognized by the virus on the surface of erythrocytes and susceptible cells. This receptor-destroying activity is important for virus release as it probably helps preventing self-aggregation and ensures the efficient spread of the progeny virus from cell to cell. May serve as a secondary viral attachment protein for initiating infection, the spike protein being the major one. May become a target for both the humoral and the cellular branches of the immune system. This Rat coronavirus (strain 681) (RCV-SDAV) protein is Hemagglutinin-esterase.